The sequence spans 1393 residues: Protein strawberry notch homolog 1 (1393 aa).

The segment at 129–148 (STRPSVSAPTVRNAMTSAPS) is disordered. Ser-148 bears the Phosphoserine mark. At Lys-149 the chain carries N6-acetyllysine. Ser-162 and Ser-214 each carry phosphoserine. The residue at position 413 (Lys-413) is an N6-acetyllysine. Residues 687-840 (APSNNSSPRD…ANSNTNSNSS (154 aa)) form a disordered region. Phosphoserine is present on residues Ser-692, Ser-693, and Ser-697. The span at 697 to 716 (SPCKENKIKKRKGEEITREA) shows a compositional bias: basic and acidic residues. Residues 733–747 (SGSESDASDNEESDY) are compositionally biased toward acidic residues. 3 positions are modified to phosphoserine: Ser-754, Ser-755, and Ser-768. Residues 756-775 (GDDDDFNPFLDESNEDDEND) are compositionally biased toward acidic residues. The span at 781 to 793 (KDHKKNKEKKKKK) shows a compositional bias: basic residues. Phosphoserine occurs at positions 794 and 815. Residues 824–840 (PAPNSTPANSNTNSNSS) show a composition bias toward low complexity. Positions 843-870 (TSQDAVERAQQMKKDLLDKLEKLAEDLP) form a coiled coil. Lys-1222 carries the N6-acetyllysine modification. At Ser-1386 the chain carries Phosphoserine.

This sequence belongs to the SBNO family.

It localises to the nucleus. Its function is as follows. Plays a crucial role in the regulation of neural stem cells (NSCs) proliferation. Enhances the phosphorylation of GSK3B through the PI3K-Akt signaling pathway, thereby upregulating the Wnt/beta-catenin signaling pathway and promoting the proliferation of NSCs. Improves ischemic stroke recovery while inhibiting neuroinflammation through small extracellular vesicles (sEVs)-mediated mechanism. Enhances the secretion of sEVs from NSCs, which in turn inhibit both the MAPK and NF-kappaB pathways in microglia. This inhibition suppresses the pro-inflammatory M1 polarization of microglia, promoting a shift towards the M2 anti-inflammatory phenotype, which is beneficial for reducing neuroinflammation. The protein is Protein strawberry notch homolog 1 (SBNO1) of Homo sapiens (Human).